The sequence spans 43 residues: Protein PsbN (43 aa).

Residues 7-27 form a helical membrane-spanning segment; the sequence is LSIAIGSILLVITGFAIYTAF.

It belongs to the PsbN family.

It is found in the cellular thylakoid membrane. Its function is as follows. May play a role in photosystem I and II biogenesis. The polypeptide is Protein PsbN (Crocosphaera subtropica (strain ATCC 51142 / BH68) (Cyanothece sp. (strain ATCC 51142))).